The chain runs to 116 residues: Large ribosomal subunit protein uL18 (116 aa).

This sequence belongs to the universal ribosomal protein uL18 family. As to quaternary structure, part of the 50S ribosomal subunit; part of the 5S rRNA/L5/L18/L25 subcomplex. Contacts the 5S and 23S rRNAs.

Functionally, this is one of the proteins that bind and probably mediate the attachment of the 5S RNA into the large ribosomal subunit, where it forms part of the central protuberance. This chain is Large ribosomal subunit protein uL18, found in Alcanivorax borkumensis (strain ATCC 700651 / DSM 11573 / NCIMB 13689 / SK2).